Reading from the N-terminus, the 253-residue chain is E3 ubiquitin-protein ligase MARCHF3 (253 aa).

Residues 63-123 form an RING-CH-type zinc finger; sequence SPFNDRPMCR…ELCHFRFAVE (61 aa). Zn(2+) contacts are provided by C71, C74, C87, C89, H97, C100, C113, and C116. Helical transmembrane passes span 145 to 165 and 182 to 202; these read LFGD…SGWL and AVGL…WTLV. Phosphoserine is present on residues S237 and S243.

In terms of assembly, interacts with MARCHF2 and STX6.

It is found in the cytoplasmic vesicle membrane. The protein localises to the early endosome membrane. It catalyses the reaction S-ubiquitinyl-[E2 ubiquitin-conjugating enzyme]-L-cysteine + [acceptor protein]-L-lysine = [E2 ubiquitin-conjugating enzyme]-L-cysteine + N(6)-ubiquitinyl-[acceptor protein]-L-lysine.. It functions in the pathway protein modification; protein ubiquitination. E3 ubiquitin-protein ligase which may be involved in endosomal trafficking. E3 ubiquitin ligases accept ubiquitin from an E2 ubiquitin-conjugating enzyme in the form of a thioester and then directly transfer the ubiquitin to targeted substrates. The chain is E3 ubiquitin-protein ligase MARCHF3 from Homo sapiens (Human).